The primary structure comprises 381 residues: Alcohol dehydrogenase-like 6 (381 aa).

Zn(2+) contacts are provided by cysteine 53, serine 55, histidine 72, cysteine 102, cysteine 105, cysteine 108, cysteine 116, and cysteine 179. Serine 55 and histidine 72 together coordinate an alcohol. Serine 55 contacts NAD(+). Residues glycine 204–glycine 209, aspartate 228, lysine 233, leucine 297–valine 299, phenylalanine 324, and arginine 374 each bind NAD(+).

This sequence belongs to the zinc-containing alcohol dehydrogenase family. Class-III subfamily. Homodimer. Requires Zn(2+) as cofactor.

The protein resides in the cytoplasm. The enzyme catalyses a primary alcohol + NAD(+) = an aldehyde + NADH + H(+). It carries out the reaction a secondary alcohol + NAD(+) = a ketone + NADH + H(+). This is Alcohol dehydrogenase-like 6 from Arabidopsis thaliana (Mouse-ear cress).